We begin with the raw amino-acid sequence, 650 residues long: Probable potassium transport system protein Kup 1 (650 aa).

A run of 12 helical transmembrane segments spans residues 12-32 (GLLI…LYVM), 54-74 (ISLV…IIAL), 97-117 (WLVL…TLTP), 139-159 (VSSQ…LFSI), 170-190 (AFGP…LINM), 216-236 (AGIF…ALYS), 249-269 (SWPF…VWIL), 295-315 (LAAI…LITG), 344-364 (IYIP…VLYF), 375-395 (GLSI…WLAM), 400-420 (PVWN…FMIS), and 428-448 (GGYV…VWYY).

It belongs to the HAK/KUP transporter (TC 2.A.72) family.

Its subcellular location is the cell membrane. The enzyme catalyses K(+)(in) + H(+)(in) = K(+)(out) + H(+)(out). In terms of biological role, transport of potassium into the cell. Likely operates as a K(+):H(+) symporter. This chain is Probable potassium transport system protein Kup 1, found in Lactobacillus acidophilus (strain ATCC 700396 / NCK56 / N2 / NCFM).